The chain runs to 402 residues: 2,3-bisphosphoglycerate-independent phosphoglycerate mutase (402 aa).

The interval serine 155–proline 174 is disordered. Over residues serine 160–proline 174 the composition is skewed to basic and acidic residues.

The protein belongs to the BPG-independent phosphoglycerate mutase family. A-PGAM subfamily.

The enzyme catalyses (2R)-2-phosphoglycerate = (2R)-3-phosphoglycerate. It functions in the pathway carbohydrate degradation; glycolysis; pyruvate from D-glyceraldehyde 3-phosphate: step 3/5. Functionally, catalyzes the interconversion of 2-phosphoglycerate and 3-phosphoglycerate. The protein is 2,3-bisphosphoglycerate-independent phosphoglycerate mutase of Picrophilus torridus (strain ATCC 700027 / DSM 9790 / JCM 10055 / NBRC 100828 / KAW 2/3).